Consider the following 629-residue polypeptide: Probable potassium transport system protein Kup 3 (629 aa).

12 helical membrane passes run 20-40, 54-74, 106-126, 143-163, 171-191, 212-232, 253-273, 291-311, 343-363, 372-392, 400-420, and 425-445; these read LSLS…LYTF, VTTI…IASV, PFII…GTIT, PSLK…LFAI, IGKA…ILGA, FLFS…LCVT, WFGL…ALVL, FLLP…QAII, IYIG…IIGF, AYGI…FIAL, IIKS…FFAA, and FING…MMYI.

Belongs to the HAK/KUP transporter (TC 2.A.72) family.

It localises to the cell inner membrane. It catalyses the reaction K(+)(in) + H(+)(in) = K(+)(out) + H(+)(out). Its function is as follows. Transport of potassium into the cell. Likely operates as a K(+):H(+) symporter. The polypeptide is Probable potassium transport system protein Kup 3 (Legionella pneumophila (strain Corby)).